A 230-amino-acid chain; its full sequence is MAVEYHLTIKEMAAELRPRERLAAHGVQSLSDAELLAILLRSGTVTTTAIDLANQILSRFGGLRGLAEAGIEELQAVKGVGPAKSAEVRAAFELGRRAACRPGEWQPTVRTPEEAAGLVMEEMRYFDREHFWALVLNTKNRVLAVEKVSVGTLNSSSVHPRELFKNAIRRSAAALILVHNHPSGDPAPSPQDIELTQRLFEAGEIVGIKVLDHIIIGDNKFTSLKLEGLF.

An MPN domain is found at Thr108–Phe230. Zn(2+) is bound by residues His179, His181, and Asp192. The JAMM motif signature appears at His179 to Asp192.

This sequence belongs to the UPF0758 family.

In Desulforudis audaxviator (strain MP104C), this protein is UPF0758 protein Daud_1467.